Reading from the N-terminus, the 398-residue chain is RNA exonuclease 3 (398 aa).

The Exonuclease domain maps to V239 to I385.

Belongs to the REXO1/REXO3 family.

The protein resides in the cytoplasm. The protein localises to the nucleus. 3' to 5' exoribonuclease required for proper 3' end maturation of MRP RNA and of the U5L snRNA. The protein is RNA exonuclease 3 (REX3) of Candida glabrata (strain ATCC 2001 / BCRC 20586 / JCM 3761 / NBRC 0622 / NRRL Y-65 / CBS 138) (Yeast).